The primary structure comprises 365 residues: Serpentine receptor class epsilon-38 (365 aa).

7 helical membrane-spanning segments follow: residues 26–46 (GMYL…GVII), 65–85 (IMTA…LLII), 124–144 (ALVI…FGIL), 168–188 (IPVF…YFVL), 196–216 (LGTS…LAVW), 256–276 (LVIV…CLVI), and 285–305 (IFIH…CSTL).

It belongs to the nematode receptor-like protein sre family.

The protein localises to the membrane. The chain is Serpentine receptor class epsilon-38 (sre-38) from Caenorhabditis elegans.